Reading from the N-terminus, the 148-residue chain is D-aminoacyl-tRNA deacylase (148 aa).

A Gly-cisPro motif, important for rejection of L-amino acids motif is present at residues 137–138 (GP).

The protein belongs to the DTD family. Homodimer.

The protein resides in the cytoplasm. It catalyses the reaction glycyl-tRNA(Ala) + H2O = tRNA(Ala) + glycine + H(+). It carries out the reaction a D-aminoacyl-tRNA + H2O = a tRNA + a D-alpha-amino acid + H(+). In terms of biological role, an aminoacyl-tRNA editing enzyme that deacylates mischarged D-aminoacyl-tRNAs. Also deacylates mischarged glycyl-tRNA(Ala), protecting cells against glycine mischarging by AlaRS. Acts via tRNA-based rather than protein-based catalysis; rejects L-amino acids rather than detecting D-amino acids in the active site. By recycling D-aminoacyl-tRNA to D-amino acids and free tRNA molecules, this enzyme counteracts the toxicity associated with the formation of D-aminoacyl-tRNA entities in vivo and helps enforce protein L-homochirality. In Lacticaseibacillus casei (strain BL23) (Lactobacillus casei), this protein is D-aminoacyl-tRNA deacylase.